The chain runs to 338 residues: Ketol-acid reductoisomerase (NADP(+)) (338 aa).

The KARI N-terminal Rossmann domain occupies 1–181; it reads MKVYYDKDAD…GGTKGGVIET (181 aa). NADP(+) contacts are provided by residues 24–27, arginine 47, and serine 52; that span reads YGSQ. The active site involves histidine 107. Glycine 133 serves as a coordination point for NADP(+). Positions 182-327 constitute a KARI C-terminal knotted domain; that stretch reads NFKEETETDL…GQLRDMMPWI (146 aa). Mg(2+) is bound by residues aspartate 190, glutamate 194, glutamate 226, and glutamate 230. Serine 251 is a substrate binding site.

It belongs to the ketol-acid reductoisomerase family. Mg(2+) is required as a cofactor.

The catalysed reaction is (2R)-2,3-dihydroxy-3-methylbutanoate + NADP(+) = (2S)-2-acetolactate + NADPH + H(+). It catalyses the reaction (2R,3R)-2,3-dihydroxy-3-methylpentanoate + NADP(+) = (S)-2-ethyl-2-hydroxy-3-oxobutanoate + NADPH + H(+). Its pathway is amino-acid biosynthesis; L-isoleucine biosynthesis; L-isoleucine from 2-oxobutanoate: step 2/4. The protein operates within amino-acid biosynthesis; L-valine biosynthesis; L-valine from pyruvate: step 2/4. In terms of biological role, involved in the biosynthesis of branched-chain amino acids (BCAA). Catalyzes an alkyl-migration followed by a ketol-acid reduction of (S)-2-acetolactate (S2AL) to yield (R)-2,3-dihydroxy-isovalerate. In the isomerase reaction, S2AL is rearranged via a Mg-dependent methyl migration to produce 3-hydroxy-3-methyl-2-ketobutyrate (HMKB). In the reductase reaction, this 2-ketoacid undergoes a metal-dependent reduction by NADPH to yield (R)-2,3-dihydroxy-isovalerate. This Azoarcus sp. (strain BH72) protein is Ketol-acid reductoisomerase (NADP(+)).